Here is a 433-residue protein sequence, read N- to C-terminus: Pyroglutamylated RF-amide peptide receptor (433 aa).

Residues M1–V46 are Extracellular-facing. N5 and N19 each carry an N-linked (GlcNAc...) asparagine glycan. The chain crosses the membrane as a helical span at residues A47–I67. The Cytoplasmic portion of the chain corresponds to Y68–N81. A helical transmembrane segment spans residues I82–T102. Residues M103 to M120 are Extracellular-facing. The helical transmembrane segment at V121 to V141 threads the bilayer. Over E142–A162 the chain is Cytoplasmic. Residues F163–V183 traverse the membrane as a helical segment. At Q184–R212 the chain is on the extracellular side. A helical membrane pass occupies residues I213 to L233. Residues Y234–A271 lie on the Cytoplasmic side of the membrane. Residues V272–V292 form a helical membrane-spanning segment. Over H293–V313 the chain is Extracellular. The helical transmembrane segment at F314 to F334 threads the bilayer. Residues M335–L433 are Cytoplasmic-facing. The disordered stretch occupies residues S356–D389.

This sequence belongs to the G-protein coupled receptor 1 family. In terms of tissue distribution, highly expressed in the adrenal gland and at moderate levels in the eye and testis. Expressed widely in the brain with high levels in the hypothalamus and moderate levels in the amygdala, basal forebrain, cortex, medulla oblongata, midbrain and thalamus.

It is found in the cell membrane. Its function is as follows. Receptor for the orexigenic neuropeptide QRFP. The activity of this receptor is mediated by G proteins that modulate adenylate cyclase activity and intracellular calcium levels. The sequence is that of Pyroglutamylated RF-amide peptide receptor (Qrfpr) from Rattus norvegicus (Rat).